A 220-amino-acid polypeptide reads, in one-letter code: Fructose-6-phosphate aldolase (220 aa).

Lys-85 (schiff-base intermediate with substrate) is an active-site residue.

It belongs to the transaldolase family. Type 3A subfamily. As to quaternary structure, homodecamer.

Its subcellular location is the cytoplasm. The enzyme catalyses beta-D-fructose 6-phosphate = dihydroxyacetone + D-glyceraldehyde 3-phosphate. Catalyzes the reversible formation of fructose 6-phosphate from dihydroxyacetone and D-glyceraldehyde 3-phosphate via an aldolization reaction. This chain is Fructose-6-phosphate aldolase, found in Salmonella gallinarum (strain 287/91 / NCTC 13346).